The primary structure comprises 364 residues: Putative acetyl-CoA C-acetyltransferase YhfS (364 aa).

The Acyl-thioester intermediate role is filled by Cys-82. His-318 serves as the catalytic Proton acceptor.

The protein belongs to the thiolase-like superfamily. Thiolase family.

In terms of biological role, may be involved in fatty acid metabolism. The protein is Putative acetyl-CoA C-acetyltransferase YhfS (yhfS) of Bacillus subtilis (strain 168).